The chain runs to 980 residues: Conserved oligomeric Golgi complex subunit 1 (980 aa).

At Ala-2 the chain carries N-acetylalanine. Position 7 is a phosphoserine (Ser-7).

It belongs to the COG1 family. In terms of assembly, component of the conserved oligomeric Golgi complex which is composed of eight different subunits and is required for normal Golgi morphology and localization.

It is found in the golgi apparatus membrane. Its function is as follows. Required for normal Golgi function. The chain is Conserved oligomeric Golgi complex subunit 1 (COG1) from Homo sapiens (Human).